A 133-amino-acid polypeptide reads, in one-letter code: L-cystatin (133 aa).

Residues 1–19 (MEGYNILAVLIILVGVSMG) form the signal peptide. Residue glutamine 20 is modified to Pyrrolidone carboxylic acid. The short motif at 67 to 71 (QVVSG) is the Secondary area of contact element. 2 disulfides stabilise this stretch: cysteine 85/cysteine 98 and cysteine 109/cysteine 129.

The protein belongs to the cystatin family. Expressed in hemocytes and slightly in heart.

It localises to the cytoplasmic granule. In terms of biological role, tight-binding inhibitor for papain. It has an important role in the protection of cells, antimicrobial activity against Gram-negative bacteria, defense against invading microbes, and response to external stimuli. This is L-cystatin from Tachypleus tridentatus (Japanese horseshoe crab).